A 525-amino-acid chain; its full sequence is Neuropilin and tolloid-like protein 2 (525 aa).

A signal peptide spans 1–22 (MALERLCSVLKVLLITVLVVEG). At 23 to 347 (IAVAQKTQDG…GVFEQITKTH (325 aa)) the chain is on the extracellular side. 7 disulfides stabilise this stretch: C45-C72, C100-C122, C177-C207, C234-C256, C297-C309, C304-C322, and C316-C331. CUB domains lie at 45-159 (CGIW…YSFI) and 177-292 (CQFE…FTSF). Positions 296–332 (PCTSSTFFCHSNMCINNSLVCNGVQNCAYPWDENHCK) constitute an LDL-receptor class A domain. An N-linked (GlcNAc...) asparagine glycan is attached at N311. The helical transmembrane segment at 348 to 368 (GTIIGITSGIVLVLLIISILV) threads the bilayer. Over 369–525 (QVKQPRKKVM…SAQASISIDF (157 aa)) the chain is Cytoplasmic. S409 is modified (phosphoserine).

In terms of assembly, interacts with GRIK2 and GRIK3, but neither with AMPA-nor with NMDA-sensitive glutamate receptors. Post-translationally, N-glycosylated.

It is found in the membrane. Its function is as follows. Accessory subunit of neuronal kainate-sensitive glutamate receptors, GRIK2 and GRIK3. Increases kainate-receptor channel activity, slowing the decay kinetics of the receptors, without affecting their expression at the cell surface, and increasing the open probability of the receptor channels. Modulates the agonist sensitivity of kainate receptors. Slows the decay of kainate receptor-mediated excitatory postsynaptic currents (EPSCs), thus directly influencing synaptic transmission. The sequence is that of Neuropilin and tolloid-like protein 2 (NETO2) from Homo sapiens (Human).